The chain runs to 200 residues: Ras-related protein Rab-10 (200 aa).

Residues S18, G19, V20, G21, K22, T23, C24, N35, T36, S40, and T41 each contribute to the GTP site. T23 is a binding site for Mg(2+). 2 consecutive short sequence motifs (switch) follow at residues 32 to 46 (DAFNTTFISTIGIDF) and 64 to 81 (DTAGQERFHTITTSYYRG). T41 and D64 together coordinate Mg(2+). G67, N122, K123, D125, M126, S152, A153, and K154 together coordinate GTP. A disordered region spans residues 181–200 (RENVDISTTGGGTGLKKCCS). Residues C198 and C199 are each lipidated (S-geranylgeranyl cysteine).

This sequence belongs to the small GTPase superfamily. Rab family. It depends on Mg(2+) as a cofactor.

It is found in the cytoplasmic vesicle membrane. The protein localises to the golgi apparatus. The protein resides in the trans-Golgi network membrane. Its subcellular location is the endosome membrane. It localises to the recycling endosome membrane. It is found in the cytoplasmic vesicle. The protein localises to the phagosome membrane. The protein resides in the cell projection. Its subcellular location is the cilium. It localises to the endoplasmic reticulum membrane. The catalysed reaction is GTP + H2O = GDP + phosphate + H(+). Regulated by guanine nucleotide exchange factors (GEFs) which promote the exchange of bound GDP for free GTP. Regulated by GTPase activating proteins (GAPs) which increase the GTP hydrolysis activity. Inhibited by GDP dissociation inhibitors (GDIs) which prevent Rab-GDP dissociation. Functionally, the small GTPases Rab are key regulators of intracellular membrane trafficking, from the formation of transport vesicles to their fusion with membranes. Rabs cycle between an inactive GDP-bound form and an active GTP-bound form that is able to recruit to membranes different set of downstream effectors directly responsible for vesicle formation, movement, tethering and fusion. That Rab is mainly involved in the biosynthetic transport of proteins from the Golgi to the plasma membrane. Also plays a specific role in asymmetric protein transport to the plasma membrane within the polarized neuron and epithelial cells. In neurons, it is involved in axonogenesis through regulation of vesicular membrane trafficking toward the axonal plasma membrane while in epithelial cells, it regulates transport from the Golgi to the basolateral membrane. Moreover, may play a role in the basolateral recycling pathway and in phagosome maturation. Finally, may play a role in endoplasmic reticulum dynamics and morphology controlling tubulation along microtubules and tubules fusion. May participate in the export of neosynthesized proteins through a Rab-dependent endosomal export route. The sequence is that of Ras-related protein Rab-10 from Diplobatis ommata (Ocellated electric ray).